The following is a 622-amino-acid chain: Protein translocase subunit SecD (622 aa).

6 helical membrane passes run 6-26, 460-480, 485-505, 512-532, 559-579, and 584-604; these read FKIG…YPTV, AGLR…IFYY, MIAD…LAAF, PGIA…VLIF, AIFD…SFGV, and GFAV…IVIT.

The protein belongs to the SecD/SecF family. SecD subfamily. Forms a complex with SecF. Part of the essential Sec protein translocation apparatus which comprises SecA, SecYEG and auxiliary proteins SecDF. Other proteins may also be involved.

The protein resides in the cell inner membrane. In terms of biological role, part of the Sec protein translocase complex. Interacts with the SecYEG preprotein conducting channel. SecDF uses the proton motive force (PMF) to complete protein translocation after the ATP-dependent function of SecA. This chain is Protein translocase subunit SecD, found in Rhodothermus marinus (strain ATCC 43812 / DSM 4252 / R-10) (Rhodothermus obamensis).